Consider the following 156-residue polypeptide: Probable cyclic pyranopterin monophosphate synthase (156 aa).

Substrate-binding positions include leucine 74–histidine 76 and methionine 110–glutamate 111. Aspartate 125 is an active-site residue.

This sequence belongs to the MoaC family. As to quaternary structure, homohexamer; trimer of dimers.

It carries out the reaction (8S)-3',8-cyclo-7,8-dihydroguanosine 5'-triphosphate = cyclic pyranopterin phosphate + diphosphate. The protein operates within cofactor biosynthesis; molybdopterin biosynthesis. Catalyzes the conversion of (8S)-3',8-cyclo-7,8-dihydroguanosine 5'-triphosphate to cyclic pyranopterin monophosphate (cPMP). The sequence is that of Probable cyclic pyranopterin monophosphate synthase from Thermococcus kodakarensis (strain ATCC BAA-918 / JCM 12380 / KOD1) (Pyrococcus kodakaraensis (strain KOD1)).